Consider the following 231-residue polypeptide: MKIGIIGAMEQEVAILKDKIEGLSTVTKAGCTFYTGTLNGADVVLLQSGIGKVAAAVGTTLLIAEHNVDVVLNTGSAGGFDSSLNLGDVVISTEVRHHDADVTAFGYEMGQMAQQPAAFIADEKLITTAEQALTEMSDKHAVRGLICTGDVFVCTPERQEFIRTHFPSVIAVEMEASAIAQTCHQFNTPFVVVRAISDVADKESPMSFDEFLPLAAQSSSEMVLNMVTLLK.

The active-site Proton acceptor is the Glu12. Substrate contacts are provided by residues Gly78, Val153, and 174-175 (ME). Asp198 serves as the catalytic Proton donor.

It belongs to the PNP/UDP phosphorylase family. MtnN subfamily.

The enzyme catalyses S-adenosyl-L-homocysteine + H2O = S-(5-deoxy-D-ribos-5-yl)-L-homocysteine + adenine. It carries out the reaction S-methyl-5'-thioadenosine + H2O = 5-(methylsulfanyl)-D-ribose + adenine. It catalyses the reaction 5'-deoxyadenosine + H2O = 5-deoxy-D-ribose + adenine. Its pathway is amino-acid biosynthesis; L-methionine biosynthesis via salvage pathway; S-methyl-5-thio-alpha-D-ribose 1-phosphate from S-methyl-5'-thioadenosine (hydrolase route): step 1/2. In terms of biological role, catalyzes the irreversible cleavage of the glycosidic bond in both 5'-methylthioadenosine (MTA) and S-adenosylhomocysteine (SAH/AdoHcy) to adenine and the corresponding thioribose, 5'-methylthioribose and S-ribosylhomocysteine, respectively. Also cleaves 5'-deoxyadenosine, a toxic by-product of radical S-adenosylmethionine (SAM) enzymes, into 5-deoxyribose and adenine. The sequence is that of 5'-methylthioadenosine/S-adenosylhomocysteine nucleosidase from Aliivibrio fischeri (strain MJ11) (Vibrio fischeri).